A 415-amino-acid chain; its full sequence is Serine hydroxymethyltransferase (415 aa).

(6S)-5,6,7,8-tetrahydrofolate-binding positions include Leu-122 and Gly-126–Leu-128. An N6-(pyridoxal phosphate)lysine modification is found at Lys-230.

The protein belongs to the SHMT family. As to quaternary structure, homodimer. Pyridoxal 5'-phosphate serves as cofactor.

The protein resides in the cytoplasm. The catalysed reaction is (6R)-5,10-methylene-5,6,7,8-tetrahydrofolate + glycine + H2O = (6S)-5,6,7,8-tetrahydrofolate + L-serine. Its pathway is one-carbon metabolism; tetrahydrofolate interconversion. The protein operates within amino-acid biosynthesis; glycine biosynthesis; glycine from L-serine: step 1/1. Functionally, catalyzes the reversible interconversion of serine and glycine with tetrahydrofolate (THF) serving as the one-carbon carrier. This reaction serves as the major source of one-carbon groups required for the biosynthesis of purines, thymidylate, methionine, and other important biomolecules. Also exhibits THF-independent aldolase activity toward beta-hydroxyamino acids, producing glycine and aldehydes, via a retro-aldol mechanism. The sequence is that of Serine hydroxymethyltransferase from Ralstonia pickettii (strain 12J).